Here is a 132-residue protein sequence, read N- to C-terminus: uncharacterized protein (132 aa).

An N-terminal signal peptide occupies residues 1–24 (MVTIGSSSLVLFLFFVVFVQITYT). Transmembrane regions (helical) follow at residues 75-95 (YVNV…ILGI) and 112-132 (ESAI…VYIH).

The protein localises to the membrane. This is an uncharacterized protein from Saccharomyces cerevisiae (strain ATCC 204508 / S288c) (Baker's yeast).